Here is a 151-residue protein sequence, read N- to C-terminus: D-aminoacyl-tRNA deacylase (151 aa).

The Gly-cisPro motif, important for rejection of L-amino acids motif lies at 138-139 (GP).

Belongs to the DTD family. Homodimer.

The protein resides in the cytoplasm. It carries out the reaction glycyl-tRNA(Ala) + H2O = tRNA(Ala) + glycine + H(+). It catalyses the reaction a D-aminoacyl-tRNA + H2O = a tRNA + a D-alpha-amino acid + H(+). An aminoacyl-tRNA editing enzyme that deacylates mischarged D-aminoacyl-tRNAs. Also deacylates mischarged glycyl-tRNA(Ala), protecting cells against glycine mischarging by AlaRS. Acts via tRNA-based rather than protein-based catalysis; rejects L-amino acids rather than detecting D-amino acids in the active site. By recycling D-aminoacyl-tRNA to D-amino acids and free tRNA molecules, this enzyme counteracts the toxicity associated with the formation of D-aminoacyl-tRNA entities in vivo and helps enforce protein L-homochirality. This chain is D-aminoacyl-tRNA deacylase, found in Picosynechococcus sp. (strain ATCC 27264 / PCC 7002 / PR-6) (Agmenellum quadruplicatum).